The chain runs to 420 residues: MNIFNNNLHETDKEINEIIKHEKLRQSSVIELIASENFVSPAVLEAQGALLTNKYAEGYPSKRFYNGCEEVDKAENLAIERVKKLFNCKYANVQPHSGSQANQAVYLALLQPGDTVLGMSLDSGGHLTHGAAPNMSGKWFNAVSYSVNKETYLIDYDEIERLADLHKPKLLIAGFSAYPRNIDFAKFREIVDKVGAYFMADIAHIAGLVATGEHQSPIPYAHAVTSTTHKTLRGPRGGLILSNDEAIGHKINSALFPGLQGGPLMHIIAAKAVAFLENLQPEYKSYIQQVISNAKALASSLQERGYDILTGGTDNHIVLVDLRKDGITGKLAANSLDRAGITCNKNAIPFDETSPFITSGIRLGTPACTTRGFKEKDFVLVGHMVADILDGLKNNEDNSALEQKVLNEVTKLIELFPFYG.

Residues Leu-121 and 125-127 each bind (6S)-5,6,7,8-tetrahydrofolate; that span reads GHL. The residue at position 230 (Lys-230) is an N6-(pyridoxal phosphate)lysine. 354–356 is a (6S)-5,6,7,8-tetrahydrofolate binding site; sequence SPF.

The protein belongs to the SHMT family. As to quaternary structure, homodimer. The cofactor is pyridoxal 5'-phosphate.

Its subcellular location is the cytoplasm. The catalysed reaction is (6R)-5,10-methylene-5,6,7,8-tetrahydrofolate + glycine + H2O = (6S)-5,6,7,8-tetrahydrofolate + L-serine. It participates in one-carbon metabolism; tetrahydrofolate interconversion. It functions in the pathway amino-acid biosynthesis; glycine biosynthesis; glycine from L-serine: step 1/1. Its function is as follows. Catalyzes the reversible interconversion of serine and glycine with tetrahydrofolate (THF) serving as the one-carbon carrier. This reaction serves as the major source of one-carbon groups required for the biosynthesis of purines, thymidylate, methionine, and other important biomolecules. Also exhibits THF-independent aldolase activity toward beta-hydroxyamino acids, producing glycine and aldehydes, via a retro-aldol mechanism. This is Serine hydroxymethyltransferase from Rickettsia africae (strain ESF-5).